The sequence spans 296 residues: Nicotinate dehydrogenase FAD-subunit (296 aa).

An FAD-binding PCMH-type domain is found at 1 to 179; it reads MKDFEFFAPK…TEVIIDRPDA (179 aa). Residues 29–36, G101, 110–114, D123, R160, M169, and K187 contribute to the FAD site; these read IIAGGTDL and TIGGN.

In terms of assembly, heterooctamer of NDHM, NDHL, NDHS and NDHF. Dimer of heterotetramers. The cofactor is FAD.

It carries out the reaction nicotinate + NADP(+) + H2O = 6-hydroxynicotinate + NADPH + H(+). It functions in the pathway cofactor degradation; nicotinate degradation; 6-hydroxynicotinate from nicotinate: step 1/1. With respect to regulation, reversibly inactivated by selenide and sulfide. Not inhibited by cyanide. Functionally, catalyzes the hydroxylation of nicotinate to 6-hydroxynicotinate. Also active against 2-pyrazinecarboxylic acid, but inactive against other nicotinate analogs. In Eubacterium barkeri (Clostridium barkeri), this protein is Nicotinate dehydrogenase FAD-subunit (ndhF).